Here is a 452-residue protein sequence, read N- to C-terminus: Glycine receptor subunit alpha-2 (452 aa).

Residues 1-27 (MYRQLVNILTALFAFFLGTNHFREAFC) form the signal peptide. The Extracellular portion of the chain corresponds to 28 to 256 (KDHDSRSGKH…KFHLERQMGY (229 aa)). N-linked (GlcNAc...) asparagine glycosylation is present at asparagine 72. Arginine 99 provides a ligand contact to glycine. Arginine 99 is a binding site for strychnine. The N-linked (GlcNAc...) asparagine glycan is linked to asparagine 103. Serine 163 provides a ligand contact to glycine. An intrachain disulfide couples cysteine 172 to cysteine 186. Zn(2+)-binding residues include glutamate 226 and glutamate 228. A disulfide bridge connects residues cysteine 232 and cysteine 243. A glycine-binding site is contributed by threonine 238. Histidine 249 is a Zn(2+) binding site. Residues 257 to 278 (YLIQMYIPSLLIVILSWVSFWI) form a helical membrane-spanning segment. Residues 279–283 (NMDAA) lie on the Cytoplasmic side of the membrane. A helical transmembrane segment spans residues 284-304 (PARVALGITTVLTMTTQSSGS). Residues 305 to 315 (RASLPKVSYVK) lie on the Extracellular side of the membrane. A helical membrane pass occupies residues 316 to 336 (AIDIWMAVCLLFVFAALLEYA). Residues 337 to 420 (AVNFVSRQHK…FVDRAKRIDT (84 aa)) lie on the Cytoplasmic side of the membrane. The helical transmembrane segment at 421 to 441 (ISRAAFPLAFLIFNIFYWITY) threads the bilayer. The Extracellular portion of the chain corresponds to 442 to 452 (KIIRHEDVHKK).

The protein belongs to the ligand-gated ion channel (TC 1.A.9) family. Glycine receptor (TC 1.A.9.3) subfamily. GLRA2 sub-subfamily. Interacts with GLRB. Heteropentamer composed of GLRA2 and GLRB; functional GLRB-GLRA2 heteropentamers contain four GLRA2 subunits and one GLRB subunit, although alternative subunit composition cannot be excluded. Homopentamer (in vitro). Both homopentamers and heteropentamers form functional ion channels, but their characteristics are subtly different. In terms of tissue distribution, detected in the retina inner plexiform layer (at protein level). Detected in neonate retina. Detected in brain. Detected in spinal cord, with higher levels in the dorsal horn.

It localises to the postsynaptic cell membrane. It is found in the synapse. The protein resides in the cell membrane. The protein localises to the cell projection. It catalyses the reaction chloride(in) = chloride(out). Channel opening is triggered by extracellular glycine. Channel opening is also triggered by taurine and beta-alanine. Inhibited by strychnine. Inhibited by picrotoxin. In terms of biological role, subunit of heteromeric glycine-gated chloride channels. Plays a role in synaptic plasticity. Contributes to the generation of inhibitory postsynaptic currents, and is involved in the down-regulation of neuronal excitability. Plays a role in cellular responses to ethanol. This chain is Glycine receptor subunit alpha-2, found in Mus musculus (Mouse).